The chain runs to 551 residues: Adenylyl cyclase-associated protein (551 aa).

Residues 34-55 form a disordered region; sequence SGHKPLPNMHRPSRDSNSQTHN. Ser92 is modified (phosphoserine). Position 96 is a phosphothreonine (Thr96). Residues 288 to 300 are compositionally biased toward polar residues; that stretch reads SASKTQAPSSGDS. Disordered regions lie at residues 288–333 and 348–395; these read SASK…NKGD and TSGL…PVKP. Positions 305–315 are enriched in pro residues; sequence LPPPPPPPPPS. Residues 352-361 are compositionally biased toward basic and acidic residues; it reads RKVDKSEMTH. The C-CAP/cofactor C-like domain occupies 395–529; sequence PPRIELENTK…EEGDYAERAV (135 aa).

This sequence belongs to the CAP family.

The N-terminal domain binds to adenylyl cyclase, thereby enabling adenylyl cyclase to be activated by upstream regulatory signals, such as Ras. The C-terminal domain is required for normal cellular morphology and growth control. This chain is Adenylyl cyclase-associated protein (cap1), found in Schizosaccharomyces pombe (strain 972 / ATCC 24843) (Fission yeast).